A 327-amino-acid chain; its full sequence is Guanine nucleotide-binding protein subunit beta-like protein 1 (327 aa).

7 WD repeats span residues 16 to 54 (LRGTQSPVHALHFCEGAQAQGRPLLFSGSQSGLVHIWSL), 58 to 97 (RAVTTLDGHGGQCVTWLQTLPQGRQLLSQGRDLKLCLWDL), 103 to 145 (AVVD…ILEM), 153 to 195 (ALKP…LWDV), 200 to 237 (VCSRIACHEEPVMDLDFDSQKARGISGSAGKALAVWSL), 242 to 282 (ALQV…VFHW), and 286 to 323 (QPLAVLAFHSAAVQCVAFTADGLLAAGSKDQRISLWSL).

In terms of tissue distribution, ubiquitous. Highly expressed in heart, liver, skeletal muscle, kidney, spleen, thymus and pancreas. Detected at low levels in lung, placenta and brain.

Its subcellular location is the cytoplasm. It localises to the nucleus. In terms of biological role, acts as a critical regulator of DNA damage response (DDR) signaling via specifically regulating phosphatidylinositol 3-kinase-related protein kinase (PIKK) family proteins. This chain is Guanine nucleotide-binding protein subunit beta-like protein 1, found in Homo sapiens (Human).